Consider the following 108-residue polypeptide: Bublin coiled-coil protein (108 aa).

Disordered regions lie at residues 1–23 (MSGP…DDDF) and 67–108 (RLEF…DEGS). Residues 25–73 (SEEYEAINSMLDQINSYLDDLEERNDSLNGKLHELMESNRQARLEFRAQ) adopt a coiled-coil conformation. Residues 99–108 (ENDKKIDEGS) are compositionally biased toward basic and acidic residues.

The protein belongs to the UPF0184 (EST00098) family.

It is found in the cell junction. The protein localises to the cytoplasm. Its subcellular location is the cytoskeleton. In terms of biological role, essential for intermediate filament organization in intestinal cells, interacts with intermediate filament and regulates intestinal lumen morphology. The chain is Bublin coiled-coil protein (bbln) from Takifugu rubripes (Japanese pufferfish).